We begin with the raw amino-acid sequence, 36 residues long: Pancreatic polypeptide (36 aa).

Position 36 is a tyrosine amide (Tyr36).

Belongs to the NPY family.

Its subcellular location is the secreted. Functionally, hormone secreted by pancreatic cells that acts as a regulator of pancreatic and gastrointestinal functions. The polypeptide is Pancreatic polypeptide (PPY) (Struthio camelus (Common ostrich)).